We begin with the raw amino-acid sequence, 273 residues long: 4-hydroxy-tetrahydrodipicolinate reductase 1 (273 aa).

Residues 13 to 18 (GAAGRM) and E39 each bind NAD(+). An NADP(+)-binding site is contributed by R40. NAD(+) is bound by residues 103–105 (GTT) and 127–130 (SGNM). The active-site Proton donor/acceptor is H161. H162 is a (S)-2,3,4,5-tetrahydrodipicolinate binding site. K165 acts as the Proton donor in catalysis. (S)-2,3,4,5-tetrahydrodipicolinate is bound at residue 171-172 (GT).

It belongs to the DapB family.

It is found in the cytoplasm. It catalyses the reaction (S)-2,3,4,5-tetrahydrodipicolinate + NAD(+) + H2O = (2S,4S)-4-hydroxy-2,3,4,5-tetrahydrodipicolinate + NADH + H(+). It carries out the reaction (S)-2,3,4,5-tetrahydrodipicolinate + NADP(+) + H2O = (2S,4S)-4-hydroxy-2,3,4,5-tetrahydrodipicolinate + NADPH + H(+). It functions in the pathway amino-acid biosynthesis; L-lysine biosynthesis via DAP pathway; (S)-tetrahydrodipicolinate from L-aspartate: step 4/4. Its function is as follows. Catalyzes the conversion of 4-hydroxy-tetrahydrodipicolinate (HTPA) to tetrahydrodipicolinate. This Mesorhizobium japonicum (strain LMG 29417 / CECT 9101 / MAFF 303099) (Mesorhizobium loti (strain MAFF 303099)) protein is 4-hydroxy-tetrahydrodipicolinate reductase 1.